A 258-amino-acid polypeptide reads, in one-letter code: Glutamate racemase (258 aa).

Substrate is bound by residues 12–13 and 44–45; these read DS and YG. Cys-75 functions as the Proton donor/acceptor in the catalytic mechanism. 76–77 is a binding site for substrate; the sequence is NT. The active-site Proton donor/acceptor is the Cys-186. 187–188 is a substrate binding site; it reads TH.

The protein belongs to the aspartate/glutamate racemases family.

The catalysed reaction is L-glutamate = D-glutamate. The protein operates within cell wall biogenesis; peptidoglycan biosynthesis. Functionally, provides the (R)-glutamate required for cell wall biosynthesis. The polypeptide is Glutamate racemase (Clostridium botulinum (strain Alaska E43 / Type E3)).